The sequence spans 260 residues: Cell division protein DivIB (260 aa).

Topologically, residues 1–25 (MGAQDQNGKNHGGLFRDFQNRNVKK) are cytoplasmic. The helical transmembrane segment at 26-46 (MWPLVMPITIILLVMIFMISS) threads the bilayer. Residues 47 to 260 (YSRVKKVTVS…STKTTSVQGY (214 aa)) lie on the Extracellular side of the membrane. Positions 48 to 119 (SRVKKVTVSG…NQVKIKVEEY (72 aa)) constitute a POTRA domain.

It belongs to the FtsQ/DivIB family. DivIB subfamily.

It is found in the cell membrane. Cell division protein that may be involved in stabilizing or promoting the assembly of the division complex. The sequence is that of Cell division protein DivIB from Lentilactobacillus buchneri (strain NRRL B-30929) (Lactobacillus buchneri).